Here is a 297-residue protein sequence, read N- to C-terminus: Acetyl-coenzyme A carboxylase carboxyl transferase subunit beta (297 aa).

Residues 27 to 296 (LWHKCPACEA…PEQAREAAAV (270 aa)) form the CoA carboxyltransferase N-terminal domain. The Zn(2+) site is built by C31, C34, C50, and C53. The segment at 31–53 (CPACEAVLYRPELEKTLDVCPKC) adopts a C4-type zinc-finger fold.

Belongs to the AccD/PCCB family. In terms of assembly, acetyl-CoA carboxylase is a heterohexamer composed of biotin carboxyl carrier protein (AccB), biotin carboxylase (AccC) and two subunits each of ACCase subunit alpha (AccA) and ACCase subunit beta (AccD). Zn(2+) is required as a cofactor.

The protein resides in the cytoplasm. The enzyme catalyses N(6)-carboxybiotinyl-L-lysyl-[protein] + acetyl-CoA = N(6)-biotinyl-L-lysyl-[protein] + malonyl-CoA. Its pathway is lipid metabolism; malonyl-CoA biosynthesis; malonyl-CoA from acetyl-CoA: step 1/1. Functionally, component of the acetyl coenzyme A carboxylase (ACC) complex. Biotin carboxylase (BC) catalyzes the carboxylation of biotin on its carrier protein (BCCP) and then the CO(2) group is transferred by the transcarboxylase to acetyl-CoA to form malonyl-CoA. This chain is Acetyl-coenzyme A carboxylase carboxyl transferase subunit beta, found in Pseudomonas putida (strain W619).